The following is a 316-amino-acid chain: Uracil-DNA glycosylase (316 aa).

The segment covering 36–79 (AAAAAPAGAGAGASKPARPSAAARPAKGTPAASAATTATGADAS) has biased composition (low complexity). A disordered region spans residues 36–91 (AAAAAPAGAGAGASKPARPSAAARPAKGTPAASAATTATGADASAPPPDPGAPTWD). Asp-159 acts as the Proton acceptor in catalysis.

This sequence belongs to the uracil-DNA glycosylase (UDG) superfamily. UNG family.

It is found in the host nucleus. It catalyses the reaction Hydrolyzes single-stranded DNA or mismatched double-stranded DNA and polynucleotides, releasing free uracil.. Excises uracil residues from the DNA which can arise as a result of misincorporation of dUMP residues by DNA polymerase or deamination of cytosines. Therefore may reduce deleterious uracil incorporation into the viral genome, particularly in terminally differentiated cells which lack DNA repair enzymes. The sequence is that of Uracil-DNA glycosylase (UL2) from Sus scrofa (Pig).